The primary structure comprises 288 residues: Homoserine kinase (288 aa).

Position 79 to 89 (79 to 89 (PPARGLGSSSA)) interacts with ATP.

It belongs to the GHMP kinase family. Homoserine kinase subfamily.

Its subcellular location is the cytoplasm. The enzyme catalyses L-homoserine + ATP = O-phospho-L-homoserine + ADP + H(+). It participates in amino-acid biosynthesis; L-threonine biosynthesis; L-threonine from L-aspartate: step 4/5. In terms of biological role, catalyzes the ATP-dependent phosphorylation of L-homoserine to L-homoserine phosphate. The protein is Homoserine kinase of Listeria welshimeri serovar 6b (strain ATCC 35897 / DSM 20650 / CCUG 15529 / CIP 8149 / NCTC 11857 / SLCC 5334 / V8).